The following is a 475-amino-acid chain: tRNA-2-methylthio-N(6)-dimethylallyladenosine synthase (475 aa).

One can recognise an MTTase N-terminal domain in the interval 2–119; sequence AKLHITTWGC…LPEMINQIRS (118 aa). [4Fe-4S] cluster contacts are provided by Cys11, Cys48, Cys82, Cys156, Cys160, and Cys163. The Radical SAM core domain maps to 142–374; it reads KAEGPTAFVS…QQRINHQAMQ (233 aa). The TRAM domain maps to 377–440; that stretch reads RLMLGTEQRI…SNSLRGEVIR (64 aa).

This sequence belongs to the methylthiotransferase family. MiaB subfamily. As to quaternary structure, monomer. [4Fe-4S] cluster is required as a cofactor.

It is found in the cytoplasm. The enzyme catalyses N(6)-dimethylallyladenosine(37) in tRNA + (sulfur carrier)-SH + AH2 + 2 S-adenosyl-L-methionine = 2-methylsulfanyl-N(6)-dimethylallyladenosine(37) in tRNA + (sulfur carrier)-H + 5'-deoxyadenosine + L-methionine + A + S-adenosyl-L-homocysteine + 2 H(+). Its function is as follows. Catalyzes the methylthiolation of N6-(dimethylallyl)adenosine (i(6)A), leading to the formation of 2-methylthio-N6-(dimethylallyl)adenosine (ms(2)i(6)A) at position 37 in tRNAs that read codons beginning with uridine. The sequence is that of tRNA-2-methylthio-N(6)-dimethylallyladenosine synthase from Haemophilus ducreyi (strain 35000HP / ATCC 700724).